The sequence spans 86 residues: Large ribosomal subunit protein bL28 (86 aa).

This sequence belongs to the bacterial ribosomal protein bL28 family.

The polypeptide is Large ribosomal subunit protein bL28 (Bacteroides thetaiotaomicron (strain ATCC 29148 / DSM 2079 / JCM 5827 / CCUG 10774 / NCTC 10582 / VPI-5482 / E50)).